A 297-amino-acid chain; its full sequence is UDP-N-acetylenolpyruvoylglucosamine reductase (297 aa).

One can recognise an FAD-binding PCMH-type domain in the interval 26–191 (QTGGPAEYLA…IAATFALKAG (166 aa)). Residue R170 is part of the active site. S220 functions as the Proton donor in the catalytic mechanism. E290 is an active-site residue.

Belongs to the MurB family. Requires FAD as cofactor.

Its subcellular location is the cytoplasm. The enzyme catalyses UDP-N-acetyl-alpha-D-muramate + NADP(+) = UDP-N-acetyl-3-O-(1-carboxyvinyl)-alpha-D-glucosamine + NADPH + H(+). It participates in cell wall biogenesis; peptidoglycan biosynthesis. Cell wall formation. This chain is UDP-N-acetylenolpyruvoylglucosamine reductase, found in Lactobacillus delbrueckii subsp. bulgaricus (strain ATCC 11842 / DSM 20081 / BCRC 10696 / JCM 1002 / NBRC 13953 / NCIMB 11778 / NCTC 12712 / WDCM 00102 / Lb 14).